A 396-amino-acid polypeptide reads, in one-letter code: Arginine biosynthesis bifunctional protein ArgJ (396 aa).

The substrate site is built by threonine 147, lysine 173, threonine 184, glutamate 270, asparagine 391, and serine 396. Threonine 184 acts as the Nucleophile in catalysis.

This sequence belongs to the ArgJ family. Heterotetramer of two alpha and two beta chains.

Its subcellular location is the cytoplasm. It catalyses the reaction N(2)-acetyl-L-ornithine + L-glutamate = N-acetyl-L-glutamate + L-ornithine. It carries out the reaction L-glutamate + acetyl-CoA = N-acetyl-L-glutamate + CoA + H(+). It functions in the pathway amino-acid biosynthesis; L-arginine biosynthesis; L-ornithine and N-acetyl-L-glutamate from L-glutamate and N(2)-acetyl-L-ornithine (cyclic): step 1/1. It participates in amino-acid biosynthesis; L-arginine biosynthesis; N(2)-acetyl-L-ornithine from L-glutamate: step 1/4. Functionally, catalyzes two activities which are involved in the cyclic version of arginine biosynthesis: the synthesis of N-acetylglutamate from glutamate and acetyl-CoA as the acetyl donor, and of ornithine by transacetylation between N(2)-acetylornithine and glutamate. In Lactococcus lactis subsp. lactis (strain IL1403) (Streptococcus lactis), this protein is Arginine biosynthesis bifunctional protein ArgJ.